A 331-amino-acid chain; its full sequence is UPF0194 membrane protein YbhG (331 aa).

Residues 1–15 form the signal peptide; it reads MKKPVVIGLAVVVLA. A coiled-coil region spans residues 107 to 208; that stretch reads EEIAQAAAAV…LNLQDSTLIA (102 aa).

This sequence belongs to the UPF0194 family.

The protein resides in the periplasm. This chain is UPF0194 membrane protein YbhG, found in Escherichia coli O139:H28 (strain E24377A / ETEC).